The sequence spans 193 residues: Glycerol-3-phosphate acyltransferase (193 aa).

5 helical membrane-spanning segments follow: residues A2–V22, Q51–A71, G78–F98, V112–V132, and I154–W174.

The protein belongs to the PlsY family. As to quaternary structure, probably interacts with PlsX.

It is found in the cell inner membrane. The catalysed reaction is an acyl phosphate + sn-glycerol 3-phosphate = a 1-acyl-sn-glycero-3-phosphate + phosphate. Its pathway is lipid metabolism; phospholipid metabolism. Its function is as follows. Catalyzes the transfer of an acyl group from acyl-phosphate (acyl-PO(4)) to glycerol-3-phosphate (G3P) to form lysophosphatidic acid (LPA). This enzyme utilizes acyl-phosphate as fatty acyl donor, but not acyl-CoA or acyl-ACP. The protein is Glycerol-3-phosphate acyltransferase of Coxiella burnetii (strain CbuG_Q212) (Coxiella burnetii (strain Q212)).